The chain runs to 98 residues: HssA/B-like protein 34 (98 aa).

Disordered regions lie at residues 1–26 and 60–98; these read MTLFSSISSMSSSMTSSRSSIASFGS and AKSSGGSCGGKGGSHNHGHGHGHGPHGHGGKGSGGSCSC. Residues 60 to 72 show a composition bias toward gly residues; it reads AKSSGGSCGGKGG. A compositionally biased stretch (basic residues) spans 73 to 88; that stretch reads SHNHGHGHGHGPHGHG. A compositionally biased stretch (gly residues) spans 89–98; that stretch reads GKGSGGSCSC.

The protein belongs to the hssA/B family.

The chain is HssA/B-like protein 34 (hssl34) from Dictyostelium discoideum (Social amoeba).